A 208-amino-acid chain; its full sequence is Protein-L-isoaspartate O-methyltransferase (208 aa).

The active site involves Ser-59.

It belongs to the methyltransferase superfamily. L-isoaspartyl/D-aspartyl protein methyltransferase family.

The protein resides in the cytoplasm. It catalyses the reaction [protein]-L-isoaspartate + S-adenosyl-L-methionine = [protein]-L-isoaspartate alpha-methyl ester + S-adenosyl-L-homocysteine. Catalyzes the methyl esterification of L-isoaspartyl residues in peptides and proteins that result from spontaneous decomposition of normal L-aspartyl and L-asparaginyl residues. It plays a role in the repair and/or degradation of damaged proteins. In Escherichia coli O7:K1 (strain IAI39 / ExPEC), this protein is Protein-L-isoaspartate O-methyltransferase.